Reading from the N-terminus, the 375-residue chain is 2-isopropylmalate synthase (375 aa).

The region spanning 1–124 is the Pyruvate carboxyltransferase domain; sequence GRTSIDNLCR…FTNIKHNELY (124 aa). 3 residues coordinate Mn(2+): histidine 59, histidine 61, and asparagine 95. The interval 250–375 is regulatory domain; the sequence is QLKYFSIHSG…SKIKNIKNKK (126 aa).

Belongs to the alpha-IPM synthase/homocitrate synthase family. LeuA type 1 subfamily. In terms of assembly, homodimer.

It is found in the cytoplasm. It catalyses the reaction 3-methyl-2-oxobutanoate + acetyl-CoA + H2O = (2S)-2-isopropylmalate + CoA + H(+). It functions in the pathway amino-acid biosynthesis; L-leucine biosynthesis; L-leucine from 3-methyl-2-oxobutanoate: step 1/4. In terms of biological role, catalyzes the condensation of the acetyl group of acetyl-CoA with 3-methyl-2-oxobutanoate (2-ketoisovalerate) to form 3-carboxy-3-hydroxy-4-methylpentanoate (2-isopropylmalate). This Buchnera aphidicola subsp. Thelaxes suberi protein is 2-isopropylmalate synthase.